We begin with the raw amino-acid sequence, 301 residues long: 33 kDa chaperonin (301 aa).

2 disulfide bridges follow: cysteine 244–cysteine 246 and cysteine 277–cysteine 280.

It belongs to the HSP33 family. Under oxidizing conditions two disulfide bonds are formed involving the reactive cysteines. Under reducing conditions zinc is bound to the reactive cysteines and the protein is inactive.

The protein localises to the cytoplasm. In terms of biological role, redox regulated molecular chaperone. Protects both thermally unfolding and oxidatively damaged proteins from irreversible aggregation. Plays an important role in the bacterial defense system toward oxidative stress. The chain is 33 kDa chaperonin from Geobacter sulfurreducens (strain ATCC 51573 / DSM 12127 / PCA).